Reading from the N-terminus, the 607-residue chain is Aspartate--tRNA(Asp/Asn) ligase (607 aa).

Glutamate 173 lines the L-aspartate pocket. An aspartate region spans residues 197–200 (QLFK). Residue arginine 219 participates in L-aspartate binding. ATP is bound by residues 219–221 (RDE) and glutamine 228. An L-aspartate-binding site is contributed by histidine 456. Residue glutamate 498 participates in ATP binding. Arginine 505 is a binding site for L-aspartate. ATP is bound at residue 550-553 (GLDR).

It belongs to the class-II aminoacyl-tRNA synthetase family. Type 1 subfamily. As to quaternary structure, homodimer.

The protein localises to the cytoplasm. The catalysed reaction is tRNA(Asx) + L-aspartate + ATP = L-aspartyl-tRNA(Asx) + AMP + diphosphate. In terms of biological role, aspartyl-tRNA synthetase with relaxed tRNA specificity since it is able to aspartylate not only its cognate tRNA(Asp) but also tRNA(Asn). Reaction proceeds in two steps: L-aspartate is first activated by ATP to form Asp-AMP and then transferred to the acceptor end of tRNA(Asp/Asn). In Magnetococcus marinus (strain ATCC BAA-1437 / JCM 17883 / MC-1), this protein is Aspartate--tRNA(Asp/Asn) ligase.